Here is a 125-residue protein sequence, read N- to C-terminus: Glycoprotein hormones alpha chain (125 aa).

The signal sequence occupies residues Met1 to Ser30. Cystine bridges form between Cys41-Cys64, Cys44-Cys93, Cys61-Cys114, Cys65-Cys116, and Cys92-Cys119. Residues Asn85 and Asn110 are each glycosylated (N-linked (GlcNAc...) asparagine).

The protein belongs to the glycoprotein hormones subunit alpha family. As to quaternary structure, heterodimer. Glycoprotein hormones are heterodimers composed of a common alpha chain described here and a unique beta chain which confers their biological specificity to the different hormones.

It localises to the secreted. In terms of biological role, shared alpha chain of heterodimeric glycoprotein hormones. These hormones bind specific receptors on target cells that in turn activate downstream signaling pathways. Involved in gametogenesis and steroidogenesis. The chain is Glycoprotein hormones alpha chain (cga) from Fundulus heteroclitus (Killifish).